The primary structure comprises 89 residues: Acylphosphatase (89 aa).

The Acylphosphatase-like domain occupies 3 to 89; that stretch reads RKEFLVSGRV…DTREKRFSTY (87 aa). Active-site residues include R18 and N36.

This sequence belongs to the acylphosphatase family.

It carries out the reaction an acyl phosphate + H2O = a carboxylate + phosphate + H(+). This chain is Acylphosphatase (acyP), found in Clostridium perfringens (strain ATCC 13124 / DSM 756 / JCM 1290 / NCIMB 6125 / NCTC 8237 / Type A).